The primary structure comprises 71 residues: Conotoxin Ca5.1 (71 aa).

The first 19 residues, 1–19 (MRCVPVFIILLLLASPAAS), serve as a signal peptide directing secretion. Positions 20–56 (DPLEKRIQSDLIRAALEDADTKNDPRILEDIVSTALA) are excised as a propeptide.

The protein belongs to the conotoxin T superfamily. In terms of processing, contains 2 disulfide bonds that can be either 'C1-C3, C2-C4' or 'C1-C4, C2-C3', since these disulfide connectivities have been observed for conotoxins with cysteine framework V (for examples, see AC P0DQQ7 and AC P81755). Expressed by the venom duct.

The protein resides in the secreted. In Conus caracteristicus (Characteristic cone), this protein is Conotoxin Ca5.1.